The primary structure comprises 150 residues: Large ribosomal subunit protein bL9 (150 aa).

This sequence belongs to the bacterial ribosomal protein bL9 family.

In terms of biological role, binds to the 23S rRNA. The polypeptide is Large ribosomal subunit protein bL9 (Shewanella woodyi (strain ATCC 51908 / MS32)).